A 709-amino-acid chain; its full sequence is Phosphoribosylformylglycinamidine synthase subunit PurL (709 aa).

Residue His36 is part of the active site. ATP is bound by residues Tyr39 and Lys80. Glu82 contacts Mg(2+). Substrate contacts are provided by residues Ser83–His86 and Arg105. His84 serves as the catalytic Proton acceptor. Asp106 is a binding site for Mg(2+). Gln226 contacts substrate. Mg(2+) is bound at residue Asp252. Substrate is bound at residue Glu294–Gln296. Residues Asp470 and Gly507 each contribute to the ATP site. A substrate-binding site is contributed by Ser510.

The protein belongs to the FGAMS family. Monomer. Part of the FGAM synthase complex composed of 1 PurL, 1 PurQ and 2 PurS subunits.

The protein localises to the cytoplasm. The catalysed reaction is N(2)-formyl-N(1)-(5-phospho-beta-D-ribosyl)glycinamide + L-glutamine + ATP + H2O = 2-formamido-N(1)-(5-O-phospho-beta-D-ribosyl)acetamidine + L-glutamate + ADP + phosphate + H(+). It participates in purine metabolism; IMP biosynthesis via de novo pathway; 5-amino-1-(5-phospho-D-ribosyl)imidazole from N(2)-formyl-N(1)-(5-phospho-D-ribosyl)glycinamide: step 1/2. Part of the phosphoribosylformylglycinamidine synthase complex involved in the purines biosynthetic pathway. Catalyzes the ATP-dependent conversion of formylglycinamide ribonucleotide (FGAR) and glutamine to yield formylglycinamidine ribonucleotide (FGAM) and glutamate. The FGAM synthase complex is composed of three subunits. PurQ produces an ammonia molecule by converting glutamine to glutamate. PurL transfers the ammonia molecule to FGAR to form FGAM in an ATP-dependent manner. PurS interacts with PurQ and PurL and is thought to assist in the transfer of the ammonia molecule from PurQ to PurL. The chain is Phosphoribosylformylglycinamidine synthase subunit PurL from Saccharolobus islandicus (strain M.14.25 / Kamchatka #1) (Sulfolobus islandicus).